A 31-amino-acid polypeptide reads, in one-letter code: Dermaseptin-DI3 (31 aa).

The protein belongs to the frog skin active peptide (FSAP) family. Dermaseptin subfamily. Expressed by the skin glands.

The protein localises to the secreted. Its function is as follows. Antibacterial activity against Gram-positive bacteria S.aureus and E.faecalis, and Gram-negative bacteria P.aeruginosa and E.coli. This is Dermaseptin-DI3 from Phyllomedusa distincta (Monkey frog).